A 497-amino-acid polypeptide reads, in one-letter code: MTGRSYEVRTFGCQMNVHDSERLSGLLESAGYVPAPPGSEADVVVFNTCAVRENADNRLYGNLGQLVPVKKGHPGMQIAVGGCLAQKDRSTILDRAPWVDVVFGTHNLHRLPVLLERARHNAAAELEIAEALEVFPSSLPTRRASHHSAWVSISVGCDNTCTFCIVPSLRGRERDRRPGDVLAEVEALVGEGALEITLLGQNVNSYGRSLGDPGAFAKLLLACGRVDGLERVRFTSPHPRDFTDDVIEAMAATPNVCHQLHMPLQSGSDDVLRRMRRSYRRDRFLGIVERVRAAMPDAAITTDIIVGFPGETEADFADTLDVVRQARFAGAFTFQYSPRPGTPAATMDGQIDRTTVAERYARLVALQDEVSWAQNRELVGRRVELLVAEGEGRKDDATGRLSGRARDGRLVHFRAGAGLAARPGDVVETVVTRAAPHHLTADGPLLSHRRTRAGDAWELARTAPVPAAGDGAGTTAARQTVALGMPSVGPAPSPGRR.

An MTTase N-terminal domain is found at 4–120; sequence RSYEVRTFGC…LPVLLERARH (117 aa). 6 residues coordinate [4Fe-4S] cluster: cysteine 13, cysteine 49, cysteine 83, cysteine 157, cysteine 161, and cysteine 164. One can recognise a Radical SAM core domain in the interval 143 to 374; sequence RASHHSAWVS…ALQDEVSWAQ (232 aa). Positions 376–445 constitute a TRAM domain; sequence RELVGRRVEL…PHHLTADGPL (70 aa).

The protein belongs to the methylthiotransferase family. MiaB subfamily. In terms of assembly, monomer. It depends on [4Fe-4S] cluster as a cofactor.

It localises to the cytoplasm. It carries out the reaction N(6)-dimethylallyladenosine(37) in tRNA + (sulfur carrier)-SH + AH2 + 2 S-adenosyl-L-methionine = 2-methylsulfanyl-N(6)-dimethylallyladenosine(37) in tRNA + (sulfur carrier)-H + 5'-deoxyadenosine + L-methionine + A + S-adenosyl-L-homocysteine + 2 H(+). In terms of biological role, catalyzes the methylthiolation of N6-(dimethylallyl)adenosine (i(6)A), leading to the formation of 2-methylthio-N6-(dimethylallyl)adenosine (ms(2)i(6)A) at position 37 in tRNAs that read codons beginning with uridine. This is tRNA-2-methylthio-N(6)-dimethylallyladenosine synthase from Frankia alni (strain DSM 45986 / CECT 9034 / ACN14a).